The sequence spans 580 residues: Acyl-coenzyme A synthetase ACSM3, mitochondrial (580 aa).

The transit peptide at 1-21 (MAMLLRARCFHRLAIPDPRRI) directs the protein to the mitochondrion. N6-succinyllysine is present on residues Lys-67 and Lys-100. N6-acetyllysine is present on Lys-151. Residues 229 to 237 (TSGTTGPPK), 368 to 373 (EGYGQT), Asp-455, Arg-470, and Lys-566 contribute to the ATP site.

The protein belongs to the ATP-dependent AMP-binding enzyme family. It depends on Mg(2+) as a cofactor. Mn(2+) serves as cofactor.

The protein localises to the mitochondrion. It is found in the mitochondrion matrix. It carries out the reaction a medium-chain fatty acid + ATP + CoA = a medium-chain fatty acyl-CoA + AMP + diphosphate. The enzyme catalyses propanoate + ATP + CoA = propanoyl-CoA + AMP + diphosphate. It catalyses the reaction butanoate + ATP + CoA = butanoyl-CoA + AMP + diphosphate. The catalysed reaction is 2-methylpropanoate + ATP + CoA = 2-methylpropanoyl-CoA + AMP + diphosphate. It carries out the reaction 2-methylbutanoate + ATP + CoA = 2-methylbutanoyl-CoA + AMP + diphosphate. The enzyme catalyses octanoate + ATP + CoA = octanoyl-CoA + AMP + diphosphate. Its function is as follows. Catalyzes the activation of fatty acids by CoA to produce an acyl-CoA, the first step in fatty acid metabolism. Capable of activating medium-chain fatty acids with a preference for isobutyrate among fatty acids with 2-6 carbon atoms. The chain is Acyl-coenzyme A synthetase ACSM3, mitochondrial (Acsm3) from Rattus norvegicus (Rat).